A 177-amino-acid polypeptide reads, in one-letter code: Bifunctional protein PyrR (177 aa).

The PRPP-binding signature appears at 99 to 111 (VVLVDDVLYTGRT).

The protein belongs to the purine/pyrimidine phosphoribosyltransferase family. PyrR subfamily. As to quaternary structure, homodimer and homohexamer; in equilibrium.

The catalysed reaction is UMP + diphosphate = 5-phospho-alpha-D-ribose 1-diphosphate + uracil. Its function is as follows. Regulates transcriptional attenuation of the pyrimidine nucleotide (pyr) operon by binding in a uridine-dependent manner to specific sites on pyr mRNA. This disrupts an antiterminator hairpin in the RNA and favors formation of a downstream transcription terminator, leading to a reduced expression of downstream genes. Also displays a weak uracil phosphoribosyltransferase activity which is not physiologically significant. The chain is Bifunctional protein PyrR from Clostridioides difficile (strain 630) (Peptoclostridium difficile).